Reading from the N-terminus, the 245-residue chain is Protein FAM133B (245 aa).

Disordered stretches follow at residues 19–38 and 69–245; these read SRGPIQSSGPTIQDYLNRPR and WKKE…SDSP. A compositionally biased stretch (basic and acidic residues) spans 69–80; sequence WKKELEKHREKL. Phosphoserine is present on serine 82. Residues 89-102 are compositionally biased toward basic residues; the sequence is KKRQKKKKEKKKSG. Residues 103 to 119 show a composition bias toward low complexity; the sequence is RYSSSSSSSSDSSSSSS. Over residues 128–140 the composition is skewed to basic residues; sequence QTKRRKKKKSHCH. Residues 165–176 are compositionally biased toward basic and acidic residues; the sequence is KDITEREKDTKG. Phosphoserine is present on residues serine 190, serine 191, serine 193, and serine 195. Residues 209-219 show a composition bias toward basic and acidic residues; it reads SGEERERTTDK. A compositionally biased stretch (basic residues) spans 220–237; it reads AKKRRKHKKHSKKKKKKA.

Belongs to the FAM133 family.

The polypeptide is Protein FAM133B (Fam133b) (Rattus norvegicus (Rat)).